The sequence spans 265 residues: Homeobox protein Nkx-6.3 (265 aa).

The homeobox DNA-binding region spans 139-198; sequence KKHTRPTFTGHQIFALEKTFEQTKYLAGPERARLAYSLGMTESQVKVWFQNRRTKWRKKS. The disordered stretch occupies residues 196–240; it reads KKSALEPSSSTPRAPGGAGAGAGGDRAPSENEDDEYNKPLDPDSD.

The protein localises to the nucleus. Functionally, putative transcription factor, which may be involved in patterning of central nervous system and pancreas. The protein is Homeobox protein Nkx-6.3 (NKX6-3) of Homo sapiens (Human).